The sequence spans 276 residues: Tryptase beta-2 (276 aa).

An N-terminal signal peptide occupies residues 1 to 21 (MLKRRLLLLWALSLLASLVYS). Positions 22 to 31 (APRPANQRVG) are cleaved as a propeptide — activation peptide. Residues 32 to 273 (IVGGHEASES…YLDWIHRYVP (242 aa)) form the Peptidase S1 domain. A disulfide bond links Cys60 and Cys76. Catalysis depends on His75, which acts as the Charge relay system. A Phosphotyrosine modification is found at Tyr98. Asp122 functions as the Charge relay system in the catalytic mechanism. A glycan (N-linked (GlcNAc...) asparagine) is linked at Asn133. 3 disulfide bridges follow: Cys156–Cys231, Cys189–Cys212, and Cys221–Cys249. Ser225 functions as the Charge relay system in the catalytic mechanism.

The protein belongs to the peptidase S1 family. Tryptase subfamily. In terms of assembly, homotetramer. The active tetramer is converted to inactive monomers at neutral and acidic pH in the absence of heparin. Low concentrations of inactive monomers become active monomers at pH 6.0 in the presence of heparin. When the concentration of active monomers is higher, they convert to active monomers and then to active tetramers. These monomers are active and functionally distinct from the tetrameric enzyme. In contrast to the hidden active sites in the tetrameric form, the active site of the monomeric form is accessible for macromolecular proteins and inhibitors, e.g. fibrinogen which is a substrate for the monomeric but not for the tetrameric form. The monomeric form forms a complex with SERPINB6. During embryogenesis, detected primarily in skin.

It localises to the secreted. It carries out the reaction Preferential cleavage: Arg-|-Xaa, Lys-|-Xaa, but with more restricted specificity than trypsin.. Its function is as follows. Tryptase is the major neutral protease present in mast cells and is secreted upon the coupled activation-degranulation response of this cell type. Plays a role in innate immunity. The protein is Tryptase beta-2 (Tpsb2) of Mus musculus (Mouse).